The primary structure comprises 241 residues: MNIKDIGVIIAKKPLKENTFIITVFTKNHGLYSGVAKESSKKSKFIYQEGNVVDFLWQARLHEHIGIAKCELVKSYIGHFIINKAKLYAFNSVISLIKELFHEREEHYNFFSLLINYLDNLAKNFCFHDYINFELALLAEMGYELDFTKCGVSNTTQDLAYLSPKSGRAVSYEVGAPYKDKLLPLPKFLLSGNDKITLEEKRQALNLTSYFFNRYLFHNHRQPEIRQVFVEYILEKDAITA.

The protein belongs to the RecO family.

Its function is as follows. Involved in DNA repair and RecF pathway recombination. The polypeptide is DNA repair protein RecO (Rickettsia bellii (strain OSU 85-389)).